A 782-amino-acid polypeptide reads, in one-letter code: Zinc finger protein 786 (782 aa).

Residues 9-80 (LTFEDVAIYF…WRESQKSGNI (72 aa)) enclose the KRAB domain. Residues 141–164 (PQRHDARAPPPLACGPSESTLKEG) are disordered. The segment at 192-209 (CGESCWENNHLVMHQRGH) adopts a C2H2-type 1; degenerate zinc-finger fold. The segment at 240–262 (FRCGVCGKSFRRKLCLLRHLAAH) adopts a C2H2-type 2 zinc-finger fold. The interval 285–364 (SHRLPQQGEK…EGDTEALQHG (80 aa)) is disordered. A C2H2-type 3; degenerate zinc finger spans residues 369–391 (CSCSECGERSPMSARLASPCRAH). 3 consecutive C2H2-type zinc fingers follow at residues 397 to 419 (FQCA…QHAH), 425 to 447 (FSCR…IRVH), and 453 to 475 (FRCA…QRLH). A C2H2-type 7; degenerate zinc finger spans residues 481–503 (FQCPECGLSFRLESMLRAHRLRH). 9 C2H2-type zinc fingers span residues 509–531 (FSCS…LRVH), 537–559 (FQCL…QHTH), 565–587 (FSCG…LRVH), 593–615 (FQCP…QRLH), 621–643 (FQCP…QLLH), 649–670 (FSCE…IRTH), 676–698 (FQCP…QGLH), 704–726 (FHCP…QRIH), and 732–754 (FACG…IRVH).

It belongs to the krueppel C2H2-type zinc-finger protein family.

Its subcellular location is the nucleus. Its function is as follows. May be involved in transcriptional regulation. The chain is Zinc finger protein 786 (ZNF786) from Homo sapiens (Human).